A 137-amino-acid polypeptide reads, in one-letter code: Protein LTO1 homolog (137 aa).

At Ala2 the chain carries N-acetylalanine. The tract at residues 22–58 (GYQEGYEEGSSLGIVEGKRYGMVHGAKIGSEIGCYRG) is deca-GX3 motif; required for interaction with YAE1 and the CIA complex.

It belongs to the LTO1 family. As to quaternary structure, forms a complex with YAE1. Interacts with PYCR1 and PYCR2.

The protein resides in the nucleus. In terms of biological role, the complex LTO1:YAE1 functions as a target specific adapter that probably recruits apo-ABCE1 to the cytosolic iron-sulfur protein assembly (CIA) complex machinery. May be required for biogenesis of the large ribosomal subunit and initiation of translation. May play a role in the regulation of proline metabolism and ROS production. This Mus musculus (Mouse) protein is Protein LTO1 homolog.